The primary structure comprises 255 residues: Triosephosphate isomerase (255 aa).

9–11 contributes to the substrate binding site; sequence NWK. The active-site Electrophile is H95. E167 functions as the Proton acceptor in the catalytic mechanism. Substrate is bound by residues G173, S212, and 233-234; that span reads GG.

It belongs to the triosephosphate isomerase family. As to quaternary structure, homodimer.

The protein resides in the cytoplasm. The enzyme catalyses D-glyceraldehyde 3-phosphate = dihydroxyacetone phosphate. The protein operates within carbohydrate biosynthesis; gluconeogenesis. It functions in the pathway carbohydrate degradation; glycolysis; D-glyceraldehyde 3-phosphate from glycerone phosphate: step 1/1. Functionally, involved in the gluconeogenesis. Catalyzes stereospecifically the conversion of dihydroxyacetone phosphate (DHAP) to D-glyceraldehyde-3-phosphate (G3P). This is Triosephosphate isomerase from Pectobacterium atrosepticum (strain SCRI 1043 / ATCC BAA-672) (Erwinia carotovora subsp. atroseptica).